The sequence spans 397 residues: MAKAKFERTKPHVNIGTIGHVDHGKTTLTAAITKVLHDKYPDLNEASAFDQIDNAPEEKARGITINISHVEYQTEKRHYAHVDAPGHADYIKNMITGAAQMDGAILVVAATDGPMPQTREHVLLARQVGVPYILVALNKSDMVDDEELLELVEMEVRELLSSQDFDGDNAPVVRVSALKALEGDAEWGKTVADLMDAVDESIPDPVRETEKPFLMPVEDVFTITGRGTVVTGRVERGVINVNEDVEIVGIKDTTTKTTVTGVEMFRKLLDQGQAGDNVGLLVRGVKREDVERGQVVVKPGTTTPHTEFEGSVYILSKDEGGRHTPFFNNYRPQFYFRTTDVTGVVTLPEGTEMVMPGDNTDISVKLIQPVAMDEGLRFAIREGGRTVGAGRVTKIIK.

The tr-type G domain occupies 10-206; the sequence is KPHVNIGTIG…AVDESIPDPV (197 aa). A G1 region spans residues 19-26; that stretch reads GHVDHGKT. 19–26 contributes to the GTP binding site; it reads GHVDHGKT. Threonine 26 serves as a coordination point for Mg(2+). The tract at residues 62–66 is G2; that stretch reads GITIN. The G3 stretch occupies residues 83–86; that stretch reads DAPG. GTP contacts are provided by residues 83 to 87 and 138 to 141; these read DAPGH and NKSD. Residues 138–141 form a G4 region; the sequence is NKSD. A G5 region spans residues 176–178; that stretch reads SAL.

Belongs to the TRAFAC class translation factor GTPase superfamily. Classic translation factor GTPase family. EF-Tu/EF-1A subfamily. In terms of assembly, monomer.

The protein localises to the cytoplasm. It carries out the reaction GTP + H2O = GDP + phosphate + H(+). GTP hydrolase that promotes the GTP-dependent binding of aminoacyl-tRNA to the A-site of ribosomes during protein biosynthesis. This Mycobacteroides abscessus (strain ATCC 19977 / DSM 44196 / CCUG 20993 / CIP 104536 / JCM 13569 / NCTC 13031 / TMC 1543 / L948) (Mycobacterium abscessus) protein is Elongation factor Tu.